Consider the following 256-residue polypeptide: uncharacterized protein (256 aa).

7 helical membrane-spanning segments follow: residues 32 to 52, 59 to 79, 112 to 132, 156 to 176, 184 to 204, 207 to 227, and 230 to 250; these read ILAS…GSYF, FAFP…AYGG, YAGN…TGLF, LFFR…IPMS, LFTM…HSIA, CTFA…MGAV, and LIPV…WMYY.

This sequence belongs to the FNT transporter (TC 1.A.16) family.

Its subcellular location is the cell membrane. This is an uncharacterized protein from Bacillus subtilis (strain 168).